A 125-amino-acid polypeptide reads, in one-letter code: Photoactive yellow protein (125 aa).

A PAS domain is found at 23–86 (LNQLAFGAIQ…GRFKEGVANG (64 aa)). Cys69 bears the S-(4-hydroxycinnamyl)cysteine mark.

Belongs to the photoactive yellow protein family. Post-translationally, the 4-hydroxycinnamic acid (p-coumaric acid) chromophore is covalently bound via a thioester linkage.

Photoactive blue light protein. Probably functions as a photoreceptor for a negative phototaxis response. The protein is Photoactive yellow protein (pyp) of Halochromatium salexigens (Chromatium salexigens).